The following is an 84-amino-acid chain: MARVTLRITGTQLLCQDEHPSLLAALESHNVAVEYQCREGYCGSCRTRLVAGQVDWIAEPLAFIQPGEILPCCCRAKGDIEIEM.

One can recognise a 2Fe-2S ferredoxin-type domain in the interval alanine 2–methionine 84. Residues cysteine 37, cysteine 42, cysteine 45, and cysteine 74 each contribute to the [2Fe-2S] cluster site.

[2Fe-2S] cluster is required as a cofactor.

This is an uncharacterized protein from Escherichia coli O6:H1 (strain CFT073 / ATCC 700928 / UPEC).